The primary structure comprises 441 residues: Tol-Pal system protein TolB (441 aa).

An N-terminal signal peptide occupies residues 1-39 (MPAMTPAFRRADLTGFLRTYGAALILLLAAMLAWQPAQA).

It belongs to the TolB family. As to quaternary structure, the Tol-Pal system is composed of five core proteins: the inner membrane proteins TolA, TolQ and TolR, the periplasmic protein TolB and the outer membrane protein Pal. They form a network linking the inner and outer membranes and the peptidoglycan layer.

It is found in the periplasm. Its function is as follows. Part of the Tol-Pal system, which plays a role in outer membrane invagination during cell division and is important for maintaining outer membrane integrity. The polypeptide is Tol-Pal system protein TolB (Bordetella bronchiseptica (strain ATCC BAA-588 / NCTC 13252 / RB50) (Alcaligenes bronchisepticus)).